The sequence spans 199 residues: Recombination protein RecR (199 aa).

The C4-type zinc finger occupies cysteine 57–cysteine 72. The Toprim domain occupies serine 80–proline 175.

Belongs to the RecR family.

Its function is as follows. May play a role in DNA repair. It seems to be involved in an RecBC-independent recombinational process of DNA repair. It may act with RecF and RecO. The sequence is that of Recombination protein RecR from Rickettsia canadensis (strain McKiel).